A 492-amino-acid chain; its full sequence is Homoserine O-acetyltransferase (492 aa).

The AB hydrolase-1 domain occupies 47 to 354 (NVILVCHALT…NYGHDAFLLE (308 aa)). Residue Ser-152 is the Nucleophile of the active site. Position 221 (Arg-221) interacts with substrate. Residues Asp-315 and His-348 contribute to the active site. Asp-349 contributes to the substrate binding site. CBS domains follow at residues 375–432 (MKLD…FTTL) and 436–492 (LTKN…HRCT).

This sequence belongs to the AB hydrolase superfamily. MetX family. In terms of assembly, homodimer.

Its subcellular location is the cytoplasm. The catalysed reaction is L-homoserine + acetyl-CoA = O-acetyl-L-homoserine + CoA. It participates in amino-acid biosynthesis; L-methionine biosynthesis via de novo pathway; O-acetyl-L-homoserine from L-homoserine: step 1/1. Transfers an acetyl group from acetyl-CoA to L-homoserine, forming acetyl-L-homoserine. This Methanosalsum zhilinae (strain DSM 4017 / NBRC 107636 / OCM 62 / WeN5) (Methanohalophilus zhilinae) protein is Homoserine O-acetyltransferase.